An 827-amino-acid chain; its full sequence is Glycerol-3-phosphate acyltransferase 1, mitochondrial (827 aa).

The Cytoplasmic portion of the chain corresponds to 1 to 87; sequence MEESSVTVGT…FFNPSIPSLG (87 aa). Positions 80–120 are important for mitochondrial localization; the sequence is NPSIPSLGLRNVIYINETHTRHRGWLARRLSYILFVQERDV. The stretch at 88–118 is an intramembrane region; the sequence is LRNVIYINETHTRHRGWLARRLSYILFVQER. Over 119–827 the chain is Cytoplasmic; the sequence is DVHKGMFATS…LEYILSFVVL (709 aa). An HXXXXD motif motif is present at residues 230 to 235; that stretch reads HRSHID. Arginine 278, arginine 279, lysine 288, arginine 293, and arginine 328 together coordinate CoA. Serine 380 carries the post-translational modification Phosphoserine. CoA is bound at residue arginine 462. Phosphoserine is present on residues serine 687 and serine 694. Lysine 779 and lysine 783 each carry N6-acetyllysine.

The protein belongs to the GPAT/DAPAT family. Highest levels in liver, intermediate levels in muscle and kidney, and lowest levels in lung and brain.

The protein resides in the mitochondrion outer membrane. It carries out the reaction sn-glycerol 3-phosphate + an acyl-CoA = a 1-acyl-sn-glycero-3-phosphate + CoA. It catalyses the reaction (9Z,12Z)-octadecadienoyl-CoA + sn-glycerol 3-phosphate = 1-(9Z,12Z)-octadecadienoyl-sn-glycero-3-phosphate + CoA. The enzyme catalyses sn-glycerol 3-phosphate + (9Z)-octadecenoyl-CoA = 1-(9Z-octadecenoyl)-sn-glycero-3-phosphate + CoA. The catalysed reaction is sn-glycerol 3-phosphate + octadecanoyl-CoA = 1-octadecanoyl-sn-glycero-3-phosphate + CoA. It carries out the reaction sn-glycerol 3-phosphate + hexadecanoyl-CoA = 1-hexadecanoyl-sn-glycero-3-phosphate + CoA. It catalyses the reaction dodecanoyl-CoA + sn-glycerol 3-phosphate = 1-dodecanoyl-sn-glycerol 3-phosphate + CoA. The enzyme catalyses 1-acyl-sn-glycero-3-phospho-(1'-sn-glycerol) + an acyl-CoA = a 1,2-diacyl-sn-glycero-3-phospho-(1'-sn-glycerol) + CoA. The protein operates within phospholipid metabolism; CDP-diacylglycerol biosynthesis; CDP-diacylglycerol from sn-glycerol 3-phosphate: step 1/3. Functionally, mitochondrial membrane protein that catalyzes the essential first step of biosynthesis of glycerolipids such as triglycerides, phosphatidic acids and lysophosphatidic acids. Esterifies acyl-group from acyl-coenzyme A (acyl-CoA) to the sn-1 position of glycerol-3-phosphate, to produce lysophosphatidic acid. Has a narrow hydrophobic binding cleft that selects for a linear acyl chain. Catalytic activity is higher for substrates with a 16-carbon acyl chain. In Mus musculus (Mouse), this protein is Glycerol-3-phosphate acyltransferase 1, mitochondrial.